We begin with the raw amino-acid sequence, 152 residues long: Ribosome maturation factor RimP (152 aa).

The protein belongs to the RimP family.

The protein resides in the cytoplasm. In terms of biological role, required for maturation of 30S ribosomal subunits. This Pseudomonas putida (strain GB-1) protein is Ribosome maturation factor RimP.